The following is a 439-amino-acid chain: FAD-linked oxidoreductase phmC (439 aa).

Residues M1–A19 form the signal peptide. Residues N29 and N84 are each glycosylated (N-linked (GlcNAc...) asparagine). The FAD-binding PCMH-type domain occupies Q89 to K272. 2 N-linked (GlcNAc...) asparagine glycosylation sites follow: N285 and N300.

This sequence belongs to the oxygen-dependent FAD-linked oxidoreductase family. The cofactor is FAD.

It participates in mycotoxin biosynthesis. Its function is as follows. FAD-linked oxidoreductase; part of the gene cluster that mediates the biosynthesis of the mycotoxins phomacins, leucine-derived cytochalasans with potent actin polymerization-inhibitory activities and monocot-specific antigerminative activities. The first step in the pathway is catalyzed by the hybrid PKS-NRPS phmA, assisted by the enoyl reductase phmE, that are responsible for fusion of the leucine precursor and the polyketide backbone to produce a 2-pyrrolidone intermediate. The polyketide synthase module (PKS) of phmA is responsible for the synthesis of the polyketide backbone and the downstream nonribosomal peptide synthetase (NRPS) amidates the carboxyl end of the polyketide with the leucine precursor. Because phmA lacks a designated enoylreductase (ER) domain, the required activity is provided the enoyl reductase phmE. Reduction by the hydrolyase phmG, followed by dehydration and intra-molecular Diels-Alder cyclization by the Diels-Alderase phmD then yield the required isoindolone-fused macrocycle. A number of oxidative steps catalyzed by the tailoring cytochrome P450 monooxygenase phmB, the FAD-linked oxidoreductase phmC and the short-chain dehydrogenase/reductase phmF, are further required to afford the final products, phomacin D and phomacin E. The sequence is that of FAD-linked oxidoreductase phmC from Phaeosphaeria nodorum (strain SN15 / ATCC MYA-4574 / FGSC 10173) (Glume blotch fungus).